The sequence spans 282 residues: 2-dehydro-3-deoxyphosphooctonate aldolase (282 aa).

Belongs to the KdsA family.

The protein localises to the cytoplasm. It catalyses the reaction D-arabinose 5-phosphate + phosphoenolpyruvate + H2O = 3-deoxy-alpha-D-manno-2-octulosonate-8-phosphate + phosphate. The protein operates within carbohydrate biosynthesis; 3-deoxy-D-manno-octulosonate biosynthesis; 3-deoxy-D-manno-octulosonate from D-ribulose 5-phosphate: step 2/3. Its pathway is bacterial outer membrane biogenesis; lipopolysaccharide biosynthesis. This chain is 2-dehydro-3-deoxyphosphooctonate aldolase, found in Shewanella sp. (strain MR-4).